Here is a 675-residue protein sequence, read N- to C-terminus: Heat shock 70 kDa protein 12A (675 aa).

Residues 1–13 (MADKEAGGSDGPR) show a composition bias toward basic and acidic residues. Residues 1–45 (MADKEAGGSDGPRETAPTSAYSSPARSLGDTGITPLSPSHIVNDT) are disordered. Ala-2 is modified (N-acetylalanine). Polar residues-rich tracts occupy residues 16 to 25 (APTSAYSSPA) and 34 to 45 (TPLSPSHIVNDT).

It belongs to the heat shock protein 70 family. In terms of assembly, interacts with SORL1 (via cytosolic C-terminus); this interaction affects SORL1 internalization and subcellular localization. In terms of tissue distribution, widely expressed with highest levels in brain, kidney and muscle.

It localises to the cytoplasm. Its subcellular location is the nucleus. Functionally, adapter protein for SORL1, but not SORT1. Delays SORL1 internalization and affects SORL1 subcellular localization. The sequence is that of Heat shock 70 kDa protein 12A (HSPA12A) from Homo sapiens (Human).